The primary structure comprises 322 residues: HPr kinase/phosphorylase (322 aa).

Catalysis depends on residues H146 and K167. ATP is bound at residue 161-168; it reads GDSGLGKS. S168 serves as a coordination point for Mg(2+). D185 acts as the Proton acceptor; for phosphorylation activity. Proton donor; for dephosphorylation activity in catalysis. Residues 209–218 are important for the catalytic mechanism of both phosphorylation and dephosphorylation; sequence LEVRGLGLLD. E210 lines the Mg(2+) pocket. The active site involves R250. The tract at residues 271-276 is important for the catalytic mechanism of dephosphorylation; the sequence is QVAAGR.

The protein belongs to the HPrK/P family. As to quaternary structure, homohexamer. Mg(2+) serves as cofactor.

The catalysed reaction is [HPr protein]-L-serine + ATP = [HPr protein]-O-phospho-L-serine + ADP + H(+). The enzyme catalyses [HPr protein]-O-phospho-L-serine + phosphate + H(+) = [HPr protein]-L-serine + diphosphate. Catalyzes the ATP- as well as the pyrophosphate-dependent phosphorylation of a specific serine residue in HPr, a phosphocarrier protein of the phosphoenolpyruvate-dependent sugar phosphotransferase system (PTS). HprK/P also catalyzes the pyrophosphate-producing, inorganic phosphate-dependent dephosphorylation (phosphorolysis) of seryl-phosphorylated HPr (P-Ser-HPr). The chain is HPr kinase/phosphorylase from Paraburkholderia xenovorans (strain LB400).